The chain runs to 488 residues: Ammonium transporter 1 member 1 (488 aa).

Helical transmembrane passes span 47–69 (TYLLFSAYLVFSMQLGFAMLLAG), 90–109 (LFYYLFGFAFALGGPSNGFI), 129–148 (FLYQWAFAIAAAGITSGSIA), 153–175 (FVAYLIYSSFLTGFVYPVVSHWF), 195–217 (VIDFAGSGVVHMVGGIAGFYGAL), 238–257 (HSASLVVLGTFLLWFGWYGF), 281–303 (AVGRTAVTTTLAGCTAALTTLFG), 316–333 (VCNGLLGGFAAITAGCSV), 337–356 (WAAIICGFVAALVLIGFNML), 368–387 (AAQLHGGCGAWGIIFTGLFA), and 418–440 (HIIQILVIIGWVSATMGPLFYIL).

It belongs to the ammonia transporter channel (TC 1.A.11.2) family. Root hairs and leaves.

It is found in the membrane. In terms of biological role, ammonium transporter that may be involved in ammonium uptake from the soil. In Solanum lycopersicum (Tomato), this protein is Ammonium transporter 1 member 1 (AMT1-1).